A 55-amino-acid chain; its full sequence is Large ribosomal subunit protein bL33 (55 aa).

This sequence belongs to the bacterial ribosomal protein bL33 family.

The sequence is that of Large ribosomal subunit protein bL33 from Rhizobium etli (strain CIAT 652).